The primary structure comprises 223 residues: UPF0319 protein VPA1584 (223 aa).

The signal sequence occupies residues 1-21 (MKLIKPLTCALALAMSGMAFA).

It belongs to the UPF0319 family.

This chain is UPF0319 protein VPA1584, found in Vibrio parahaemolyticus serotype O3:K6 (strain RIMD 2210633).